The chain runs to 239 residues: Ribonuclease PH (239 aa).

Phosphate-binding positions include arginine 86 and glycine 124 to arginine 126.

This sequence belongs to the RNase PH family. As to quaternary structure, homohexameric ring arranged as a trimer of dimers.

The enzyme catalyses tRNA(n+1) + phosphate = tRNA(n) + a ribonucleoside 5'-diphosphate. Functionally, phosphorolytic 3'-5' exoribonuclease that plays an important role in tRNA 3'-end maturation. Removes nucleotide residues following the 3'-CCA terminus of tRNAs; can also add nucleotides to the ends of RNA molecules by using nucleoside diphosphates as substrates, but this may not be physiologically important. Probably plays a role in initiation of 16S rRNA degradation (leading to ribosome degradation) during starvation. The polypeptide is Ribonuclease PH (Psychromonas ingrahamii (strain DSM 17664 / CCUG 51855 / 37)).